The chain runs to 643 residues: NAD-dependent malic enzyme, mitochondrial (643 aa).

A mitochondrion-targeting transit peptide spans 1–38 (PRVRSFIAHQSGITSVIRRSPDIAHRMVRSLSVSSQRN). Fumarate is bound by residues Q116, R119, and R143. The Proton donor role is filled by Y164. R219 serves as a coordination point for (S)-malate. R219 contributes to the NAD(+) binding site. Residue K237 is the Proton acceptor of the active site. Residues E309 and D310 each contribute to the a divalent metal cation site. Positions 313, 333, 366, 369, and 472 each coordinate NAD(+). D333 is an a divalent metal cation binding site. Residues N472 and N516 each coordinate (S)-malate.

The protein belongs to the malic enzymes family. As to quaternary structure, homotetramer. Requires Mg(2+) as cofactor. The cofactor is Mn(2+).

Its subcellular location is the mitochondrion matrix. The catalysed reaction is (S)-malate + NAD(+) = pyruvate + CO2 + NADH. It catalyses the reaction oxaloacetate + H(+) = pyruvate + CO2. With respect to regulation, subject to allosteric activation by fumarate. Functionally, NAD-dependent mitochondrial malic enzyme that catalyzes the oxidative decarboxylation of malate to pyruvate. The protein is NAD-dependent malic enzyme, mitochondrial of Ascaris suum (Pig roundworm).